Consider the following 39-residue polypeptide: MNYKAFTQIAIDLLSAKLCNCTQAIMTHIIASFLAFMFF.

A helical membrane pass occupies residues 13–35; that stretch reads LLSAKLCNCTQAIMTHIIASFLA.

Its subcellular location is the cell inner membrane. The protein is Protein YkiC of Escherichia coli (strain K12).